The following is a 436-amino-acid chain: Trigger factor (436 aa).

The PPIase FKBP-type domain occupies 161–246 (DLRVNMDFVG…LNKVEKQDLP (86 aa)).

This sequence belongs to the FKBP-type PPIase family. Tig subfamily.

The protein resides in the cytoplasm. It carries out the reaction [protein]-peptidylproline (omega=180) = [protein]-peptidylproline (omega=0). Functionally, involved in protein export. Acts as a chaperone by maintaining the newly synthesized protein in an open conformation. Functions as a peptidyl-prolyl cis-trans isomerase. In Tolumonas auensis (strain DSM 9187 / NBRC 110442 / TA 4), this protein is Trigger factor.